The sequence spans 332 residues: L-lactate dehydrogenase A chain (332 aa).

NAD(+) is bound by residues 29 to 57 (GAVG…IEDK) and arginine 99. The substrate site is built by arginine 106, asparagine 138, and arginine 169. Asparagine 138 lines the NAD(+) pocket. The Proton acceptor role is filled by histidine 193. Threonine 248 serves as a coordination point for substrate.

This sequence belongs to the LDH/MDH superfamily. LDH family. Homotetramer.

The protein localises to the cytoplasm. It carries out the reaction (S)-lactate + NAD(+) = pyruvate + NADH + H(+). It participates in fermentation; pyruvate fermentation to lactate; (S)-lactate from pyruvate: step 1/1. Interconverts simultaneously and stereospecifically pyruvate and lactate with concomitant interconversion of NADH and NAD(+). This Trachemys scripta elegans (Red-eared slider turtle) protein is L-lactate dehydrogenase A chain (LDHA).